The sequence spans 436 residues: Kynureninase (436 aa).

Residues Leu88, Thr89, 116–119 (FPSD), Asp202, His205, and Tyr227 each bind pyridoxal 5'-phosphate. Lys228 carries the N6-(pyridoxal phosphate)lysine modification. Pyridoxal 5'-phosphate-binding residues include Trp280 and Asn308.

Belongs to the kynureninase family. As to quaternary structure, homodimer. Pyridoxal 5'-phosphate is required as a cofactor.

It localises to the cytoplasm. The enzyme catalyses L-kynurenine + H2O = anthranilate + L-alanine + H(+). It carries out the reaction 3-hydroxy-L-kynurenine + H2O = 3-hydroxyanthranilate + L-alanine + H(+). It functions in the pathway amino-acid degradation; L-kynurenine degradation; L-alanine and anthranilate from L-kynurenine: step 1/1. The protein operates within cofactor biosynthesis; NAD(+) biosynthesis; quinolinate from L-kynurenine: step 2/3. Its function is as follows. Catalyzes the cleavage of L-kynurenine (L-Kyn) and L-3-hydroxykynurenine (L-3OHKyn) into anthranilic acid (AA) and 3-hydroxyanthranilic acid (3-OHAA), respectively. The polypeptide is Kynureninase (Schistosoma japonicum (Blood fluke)).